The sequence spans 88 residues: Small ribosomal subunit protein bS16c (88 aa).

It belongs to the bacterial ribosomal protein bS16 family.

It is found in the plastid. The protein localises to the chloroplast. The chain is Small ribosomal subunit protein bS16c from Gossypium barbadense (Sea Island cotton).